A 409-amino-acid polypeptide reads, in one-letter code: Putative kinase Y4dM (409 aa).

Aspartate 293 (proton acceptor) is an active-site residue.

Belongs to the HipA Ser/Thr kinase family.

This Sinorhizobium fredii (strain NBRC 101917 / NGR234) protein is Putative kinase Y4dM.